A 416-amino-acid polypeptide reads, in one-letter code: Histidine--tRNA ligase (416 aa).

This sequence belongs to the class-II aminoacyl-tRNA synthetase family. Homodimer.

Its subcellular location is the cytoplasm. The catalysed reaction is tRNA(His) + L-histidine + ATP = L-histidyl-tRNA(His) + AMP + diphosphate + H(+). The polypeptide is Histidine--tRNA ligase (Dictyoglomus thermophilum (strain ATCC 35947 / DSM 3960 / H-6-12)).